A 1388-amino-acid chain; its full sequence is Dicer-like protein 2 (1388 aa).

The 181-residue stretch at 23–203 folds into the Helicase ATP-binding domain; it reads MLEASMKENI…LLMVESNLDA (181 aa). Residue 36–43 coordinates ATP; sequence MDTGSGKT. The DEAH box signature appears at 144–147; the sequence is DEAH. The Helicase C-terminal domain maps to 368–537; the sequence is KFESLLNFLD…DDERQLQSVS (170 aa). The region spanning 564-658 is the Dicer dsRNA-binding fold domain; it reads AMAHLHHFCA…LPLTKKPELK (95 aa). RNase III domains follow at residues 906-1059 and 1098-1281; these read ISAI…VDGG and NDRL…VDSG. Mg(2+) is bound by residues Glu-1137, Asp-1267, and Glu-1270.

It belongs to the helicase family. Dicer subfamily. Mg(2+) is required as a cofactor. The cofactor is Mn(2+).

In terms of biological role, dicer-like endonuclease involved in cleaving double-stranded RNA in the RNA interference (RNAi) pathway. Produces 21 to 25 bp dsRNAs (siRNAs) which target the selective destruction of homologous RNAs leading to sequence-specific suppression of gene expression, called post-transcriptional gene silencing (PTGS). Part of a broad host defense response against viral infection and transposons. This chain is Dicer-like protein 2 (dcl2), found in Aspergillus fumigatus (strain ATCC MYA-4609 / CBS 101355 / FGSC A1100 / Af293) (Neosartorya fumigata).